Consider the following 67-residue polypeptide: uncharacterized protein (67 aa).

This is an uncharacterized protein from Bacillus subtilis (strain 168).